We begin with the raw amino-acid sequence, 401 residues long: Elongation factor Tu (401 aa).

A tr-type G domain is found at 10–211; that stretch reads KPHLNIGTIG…AVDTYVPNPT (202 aa). The interval 19-26 is G1; it reads GHVDHGKT. 19–26 serves as a coordination point for GTP; it reads GHVDHGKT. Mg(2+) is bound at residue Thr26. The G2 stretch occupies residues 62-66; sequence GITIA. Residues 83-86 form a G3 region; the sequence is DCPG. GTP is bound by residues 83–87 and 138–141; these read DCPGH and NKAD. The segment at 138-141 is G4; the sequence is NKAD. The tract at residues 179–181 is G5; the sequence is SAL.

This sequence belongs to the TRAFAC class translation factor GTPase superfamily. Classic translation factor GTPase family. EF-Tu/EF-1A subfamily. As to quaternary structure, monomer.

Its subcellular location is the cytoplasm. It carries out the reaction GTP + H2O = GDP + phosphate + H(+). GTP hydrolase that promotes the GTP-dependent binding of aminoacyl-tRNA to the A-site of ribosomes during protein biosynthesis. In Leptospira biflexa serovar Patoc (strain Patoc 1 / Ames), this protein is Elongation factor Tu.